Reading from the N-terminus, the 587-residue chain is Formate--tetrahydrofolate ligase (587 aa).

ATP is bound at residue 73–80; the sequence is TPLGEGKS.

It belongs to the formate--tetrahydrofolate ligase family.

The catalysed reaction is (6S)-5,6,7,8-tetrahydrofolate + formate + ATP = (6R)-10-formyltetrahydrofolate + ADP + phosphate. The protein operates within one-carbon metabolism; tetrahydrofolate interconversion. The polypeptide is Formate--tetrahydrofolate ligase (Syntrophobacter fumaroxidans (strain DSM 10017 / MPOB)).